The chain runs to 480 residues: UDP-N-acetylmuramate--L-alanine ligase (480 aa).

Position 115–121 (115–121 (GTHGKTT)) interacts with ATP.

The protein belongs to the MurCDEF family.

Its subcellular location is the cytoplasm. The enzyme catalyses UDP-N-acetyl-alpha-D-muramate + L-alanine + ATP = UDP-N-acetyl-alpha-D-muramoyl-L-alanine + ADP + phosphate + H(+). It participates in cell wall biogenesis; peptidoglycan biosynthesis. Its function is as follows. Cell wall formation. The polypeptide is UDP-N-acetylmuramate--L-alanine ligase (Gluconacetobacter diazotrophicus (strain ATCC 49037 / DSM 5601 / CCUG 37298 / CIP 103539 / LMG 7603 / PAl5)).